A 772-amino-acid chain; its full sequence is MGDEDDDESCAVELRITEANLTGHEEKVSVENFELLKVLGTGAYGKVFLVRKAGGHDAGKLYAMKVLRKAALVQRAKTQEHTRTERSVLELVRQAPFLVTLHYAFQTDAKLHLILDYVSGGEMFTHLYQRQYFKEAEVRVYGGEIVLALEHLHKLGIIYRDLKLENVLLDSEGHIVLTDFGLSKEFLTEEKERTFSFCGTIEYMAPEIIRSKTGHGKAVDWWSLGILLFELLTGASPFTLEGERNTQAEVSRRILKCSPPFPPRIGPVAQDLLQRLLCKDPKKRLGAGPQGAQEVRNHPFFQGLDWVALAARKIPAPFRPQIRSELDVGNFAEEFTRLEPVYSPPGSPPPGDPRIFQGYSFVAPSILFDHNNAVMTDGLEAPGAGDRPGRAAVARSAMMQDSPFFQQYELDLREPALGQGSFSVCRRCRQRQSGQEFAVKILSRRLEANTQREVAALRLCQSHPNVVNLHEVHHDQLHTYLVLELLRGGELLEHIRKKRHFSESEASQILRSLVSAVSFMHEEAGVVHRDLKPENILYADDTPGAPVKIIDFGFARLRPQSPGVPMQTPCFTLQYAAPELLAQQGYDESCDLWSLGVILYMMLSGQVPFQGASGQGGQSQAAEIMCKIREGRFSLDGEAWQGVSEEAKELVRGLLTVDPAKRLKLEGLRGSSWLQDGSARSSPPLRTPDVLESSGPAVRSGLNATFMAFNRGKREGFFLKSVENAPLAKRRKQKLRSATASRRGSPAPANPGRAPVASKGAPRRANGPLPPS.

Residues 33-301 (FELLKVLGTG…AQEVRNHPFF (269 aa)) enclose the Protein kinase 1 domain. Residues 39–47 (LGTGAYGKV) and K65 each bind ATP. The active-site Proton acceptor is D161. The residue at position 196 (S196) is a Phosphoserine; by autocatalysis. In terms of domain architecture, AGC-kinase C-terminal spans 302 to 371 (QGLDWVALAA…VAPSILFDHN (70 aa)). S343 is subject to Phosphoserine; by MAPK1, MAPK3 and MAPK14. S347 carries the phosphoserine modification. Residues S360 and S365 each carry the phosphoserine; by autocatalysis modification. Residues 411–674 (DLREPALGQG…LEGLRGSSWL (264 aa)) enclose the Protein kinase 2 domain. ATP contacts are provided by residues 417–425 (LGQGSFSVC) and K440. D530 functions as the Proton acceptor in the catalytic mechanism. The residue at position 542 (T542) is a Phosphothreonine. The residue at position 568 (T568) is a Phosphothreonine; by MAPK1, MAPK3 and MAPK14. S634 and S678 each carry phosphoserine. Disordered regions lie at residues 673–696 (WLQD…SSGP) and 728–772 (AKRR…LPPS). Position 687 is a phosphothreonine (T687). A required for nuclear targeting and association with MAPK14 region spans residues 725-772 (APLAKRRKQKLRSATASRRGSPAPANPGRAPVASKGAPRRANGPLPPS). Phosphoserine; by autocatalysis is present on S737. At S745 the chain carries Phosphoserine.

This sequence belongs to the protein kinase superfamily. AGC Ser/Thr protein kinase family. S6 kinase subfamily. In terms of assembly, forms a complex with either MAPK1/ERK2 or MAPK3/ERK1 in quiescent cells which transiently dissociates following mitogenic stimulation. Also associates with MAPK14/p38-alpha. Activated RPS6KA4 associates with and phosphorylates the NF-kappa-B p65 subunit RELA. It depends on Mg(2+) as a cofactor. Ser-343 and Thr-568 phosphorylation is required for kinase activity. Ser-343 and Ser-196 are autophosphorylated by the C-terminal kinase domain, and their phosphorylation is essential for the catalytic activity of the N-terminal kinase domain. Phosphorylated at Ser-343, Thr-568 and Thr-687 by MAPK1/ERK2, MAPK3/ERK1 and MAPK14/p38-alpha. Autophosphorylated at Ser-737 and Ser-745 by the N-terminal kinase domain.

The protein localises to the nucleus. It carries out the reaction L-seryl-[protein] + ATP = O-phospho-L-seryl-[protein] + ADP + H(+). The catalysed reaction is L-threonyl-[protein] + ATP = O-phospho-L-threonyl-[protein] + ADP + H(+). With respect to regulation, activated by phosphorylation at Ser-343, Thr-568 and Thr-687 by MAPK1/ERK2, MAPK3/ERK1 and MAPK14/p38-alpha, and by further autophosphorylation of Ser-196, Ser-360 and Ser-365 by the activated C-terminal kinase domain. In terms of biological role, serine/threonine-protein kinase that is required for the mitogen or stress-induced phosphorylation of the transcription factors CREB1 and ATF1 and for the regulation of the transcription factor RELA, and that contributes to gene activation by histone phosphorylation and functions in the regulation of inflammatory genes. Phosphorylates CREB1 and ATF1 in response to mitogenic or stress stimuli such as UV-C irradiation, epidermal growth factor (EGF) and anisomycin. Plays an essential role in the control of RELA transcriptional activity in response to TNF. Phosphorylates 'Ser-10' of histone H3 in response to mitogenics, stress stimuli and EGF, which results in the transcriptional activation of several immediate early genes, including proto-oncogenes c-fos/FOS and c-jun/JUN. May also phosphorylate 'Ser-28' of histone H3. Mediates the mitogen- and stress-induced phosphorylation of high mobility group protein 1 (HMGN1/HMG14). In lipopolysaccharide-stimulated primary macrophages, acts downstream of the Toll-like receptor TLR4 to limit the production of pro-inflammatory cytokines. Functions probably by inducing transcription of the MAP kinase phosphatase DUSP1 and the anti-inflammatory cytokine interleukin 10 (IL10), via CREB1 and ATF1 transcription factors. In Homo sapiens (Human), this protein is Ribosomal protein S6 kinase alpha-4 (RPS6KA4).